The following is a 652-amino-acid chain: DNA ligase (652 aa).

NAD(+) contacts are provided by residues 29 to 33, 78 to 79, and Glu-107; these read DSEYD and SL. Catalysis depends on Lys-109, which acts as the N6-AMP-lysine intermediate. NAD(+)-binding residues include Arg-130, Glu-164, Lys-278, and Lys-302. Residues Cys-395, Cys-398, Cys-413, and Cys-418 each contribute to the Zn(2+) site. The region spanning 577-652 is the BRCT domain; it reads VADAALSGLT…VRDEAWLESL (76 aa).

The protein belongs to the NAD-dependent DNA ligase family. LigA subfamily. The cofactor is Mg(2+). Mn(2+) is required as a cofactor.

The catalysed reaction is NAD(+) + (deoxyribonucleotide)n-3'-hydroxyl + 5'-phospho-(deoxyribonucleotide)m = (deoxyribonucleotide)n+m + AMP + beta-nicotinamide D-nucleotide.. Functionally, DNA ligase that catalyzes the formation of phosphodiester linkages between 5'-phosphoryl and 3'-hydroxyl groups in double-stranded DNA using NAD as a coenzyme and as the energy source for the reaction. It is essential for DNA replication and repair of damaged DNA. The sequence is that of DNA ligase from Streptococcus pneumoniae (strain P1031).